A 124-amino-acid chain; its full sequence is Large ribosomal subunit protein bL12 (124 aa).

It belongs to the bacterial ribosomal protein bL12 family. In terms of assembly, homodimer. Part of the ribosomal stalk of the 50S ribosomal subunit. Forms a multimeric L10(L12)X complex, where L10 forms an elongated spine to which 2 to 4 L12 dimers bind in a sequential fashion. Binds GTP-bound translation factors.

Functionally, forms part of the ribosomal stalk which helps the ribosome interact with GTP-bound translation factors. Is thus essential for accurate translation. This Campylobacter fetus subsp. fetus (strain 82-40) protein is Large ribosomal subunit protein bL12.